A 217-amino-acid chain; its full sequence is Biotin transport regulator (217 aa).

Residues 14 to 49 (GDGLGNLAGRSADPTGAADKGESGVPVPPTGFVDPT) are disordered.

Its function is as follows. May be part of a system that R.meliloti uses to respond to plant (alfalfa) biotin signals. The polypeptide is Biotin transport regulator (bioS) (Rhizobium meliloti (strain 1021) (Ensifer meliloti)).